A 401-amino-acid chain; its full sequence is Aspartate aminotransferase, mitochondrial (401 aa).

Thr19 is modified (phosphothreonine). An N6-acetyllysine modification is found at Lys30. Residue Gly36 participates in substrate binding. Lys44 carries the post-translational modification N6-acetyllysine; alternate. The residue at position 44 (Lys44) is an N6-succinyllysine; alternate. Lys53 carries the N6-acetyllysine modification. Residue Lys61 is modified to N6-acetyllysine; alternate. Lys61 carries the N6-succinyllysine; alternate modification. Tyr67 carries the 3'-nitrotyrosine; alternate modification. At Tyr67 the chain carries Phosphotyrosine; alternate. N6-acetyllysine; alternate is present on residues Lys78, Lys93, and Lys130. N6-succinyllysine; alternate occurs at positions 78, 93, and 130. Trp133 serves as a coordination point for substrate. An N6-acetyllysine; alternate modification is found at Lys156. Position 156 is an N6-succinyllysine; alternate (Lys156). Substrate is bound at residue Asn186. Position 198 is an N6-succinyllysine (Lys198). Lys205 bears the N6-acetyllysine mark. N6-acetyllysine; alternate occurs at positions 250 and 267. The residue at position 250 (Lys250) is an N6-(pyridoxal phosphate)lysine; alternate. An N6-succinyllysine; alternate modification is found at Lys267. Lys273 carries the N6-acetyllysine modification. Lys280 is subject to N6-acetyllysine; alternate. Position 280 is an N6-succinyllysine; alternate (Lys280). Arg284 carries the asymmetric dimethylarginine modification. An N6-acetyllysine; alternate modification is found at Lys309. Lys309 is subject to N6-succinyllysine; alternate. Position 316 is an N6-acetyllysine (Lys316). Lys334 is modified (N6-acetyllysine; alternate). N6-succinyllysine; alternate is present on Lys334. N6-acetyllysine occurs at positions 335 and 358. N6-acetyllysine; alternate is present on residues Lys367 and Lys375. An N6-succinyllysine; alternate mark is found at Lys367 and Lys375. Arg378 contacts substrate.

It belongs to the class-I pyridoxal-phosphate-dependent aminotransferase family. Homodimer. Pyridoxal 5'-phosphate serves as cofactor.

The protein localises to the mitochondrion matrix. Its subcellular location is the cell membrane. It carries out the reaction L-aspartate + 2-oxoglutarate = oxaloacetate + L-glutamate. It catalyses the reaction L-kynurenine + 2-oxoglutarate = kynurenate + L-glutamate + H2O. Functionally, catalyzes the irreversible transamination of the L-tryptophan metabolite L-kynurenine to form kynurenic acid (KA). As a member of the malate-aspartate shuttle, it has a key role in the intracellular NAD(H) redox balance. Is important for metabolite exchange between mitochondria and cytosol, and for amino acid metabolism. Facilitates cellular uptake of long-chain free fatty acids. The protein is Aspartate aminotransferase, mitochondrial (GOT2) of Equus caballus (Horse).